A 473-amino-acid chain; its full sequence is Probable serine/threonine-protein kinase glkA (473 aa).

The segment at 1–84 (MTIPTDNNSS…QSSSTATVNS (84 aa)) is disordered. Positions 7-84 (NNSSNNKGYN…QSSSTATVNS (78 aa)) are enriched in low complexity. The region spanning 91–366 (YEIIKQVGQG…IDEIIAHPFL (276 aa)) is the Protein kinase domain. ATP contacts are provided by residues 97 to 105 (VGQGTFGKV) and Lys119. Asp208 acts as the Proton acceptor in catalysis. 2 disordered regions span residues 389–418 (GKSS…SNNK) and 437–473 (SSNL…TNTI). A compositionally biased stretch (low complexity) spans 442–466 (SIDNSNNGKSSSSSNNIPSLNNSNN).

Belongs to the protein kinase superfamily. CMGC Ser/Thr protein kinase family. GSK-3 subfamily.

It catalyses the reaction L-seryl-[tau protein] + ATP = O-phospho-L-seryl-[tau protein] + ADP + H(+). It carries out the reaction L-threonyl-[tau protein] + ATP = O-phospho-L-threonyl-[tau protein] + ADP + H(+). This Dictyostelium discoideum (Social amoeba) protein is Probable serine/threonine-protein kinase glkA (glkA).